Here is a 201-residue protein sequence, read N- to C-terminus: Probable quinol oxidase subunit 3 (201 aa).

A run of 5 helical transmembrane segments spans residues 20–40, 62–82, 91–111, 133–153, and 172–192; these read LGFW…FATL, LILI…IAIY, LMMF…GFEI, FFIL…WVIC, and FIVS…FTAV.

It belongs to the cytochrome c oxidase subunit 3 family.

The protein resides in the cell membrane. The catalysed reaction is 2 a quinol + O2 = 2 a quinone + 2 H2O. Functionally, catalyzes quinol oxidation with the concomitant reduction of oxygen to water. The chain is Probable quinol oxidase subunit 3 (qoxC) from Staphylococcus epidermidis (strain ATCC 35984 / DSM 28319 / BCRC 17069 / CCUG 31568 / BM 3577 / RP62A).